A 474-amino-acid polypeptide reads, in one-letter code: Cysteine protease ATG4A (474 aa).

A disordered region spans residues 1–32 (MTSLPGRGVSPSSSDPLCEGNAAPSSSSSSGQ). C161 (nucleophile) is an active-site residue. Active-site residues include D358 and H360. Residues 439–449 (KQMYNEESSSG) show a composition bias toward polar residues. A disordered region spans residues 439–474 (KQMYNEESSSGDGMDSINVEGLDGSGETGEEEWQIL).

This sequence belongs to the peptidase C54 family. As to quaternary structure, interacts with ATG8.

It is found in the cytoplasm. It catalyses the reaction [protein]-C-terminal L-amino acid-glycyl-phosphatidylethanolamide + H2O = [protein]-C-terminal L-amino acid-glycine + a 1,2-diacyl-sn-glycero-3-phosphoethanolamine. Functionally, cysteine protease that plays a key role in autophagy by mediating both proteolytic activation and delipidation of ATG8 family proteins. The protease activity is required for proteolytic activation of ATG8 family proteins: cleaves the C-terminal amino acid of ATG8 proteins to reveal a C-terminal glycine. Exposure of the glycine at the C-terminus is essential for ATG8 proteins conjugation to phosphatidylethanolamine (PE) and insertion to membranes, which is necessary for autophagy. In addition to the protease activity, also mediates delipidation of PE-conjugated ATG8 proteins. The protein is Cysteine protease ATG4A (ATG4A) of Oryza sativa subsp. japonica (Rice).